Reading from the N-terminus, the 442-residue chain is tRNA modification GTPase MnmE (442 aa).

Residues Arg-27, Glu-84, and Lys-124 each contribute to the (6S)-5-formyl-5,6,7,8-tetrahydrofolate site. The 146-residue stretch at 221–366 (GFQIVILGAP…LMELISQASA (146 aa)) folds into the TrmE-type G domain. GTP contacts are provided by residues 231–236 (NAGKSS), 250–256 (TEEPGTT), 275–278 (DTAG), and 329–332 (NKAD). 2 residues coordinate Mg(2+): Ser-235 and Thr-256. (6S)-5-formyl-5,6,7,8-tetrahydrofolate is bound at residue Lys-442.

This sequence belongs to the TRAFAC class TrmE-Era-EngA-EngB-Septin-like GTPase superfamily. TrmE GTPase family. As to quaternary structure, homodimer. Heterotetramer of two MnmE and two MnmG subunits. K(+) serves as cofactor.

It is found in the cytoplasm. Functionally, exhibits a very high intrinsic GTPase hydrolysis rate. Involved in the addition of a carboxymethylaminomethyl (cmnm) group at the wobble position (U34) of certain tRNAs, forming tRNA-cmnm(5)s(2)U34. This chain is tRNA modification GTPase MnmE, found in Chelativorans sp. (strain BNC1).